We begin with the raw amino-acid sequence, 259 residues long: MTFPNINPVIFSIGPLAISWYSLSYVIGILLGWFYANKIIEKFKPQITKKNLEDFITYAVIGIIVGGRLGFVLLYNPSRYFSNPIDILKTYEGGMSFHGGALGGIIAAYLFCRKYKINFLSLTDIIAPVVPIGLFLGRIANFINGELYGRITNASFGMIFPNSDLMPRHPSQLYEAFFEGLVLFSILAYATFKHKTLKKCGLNSGIFFTFYGLFRITIEIFREPDIQIGFILDSLTMGQILSVPMLLLGSYLICQSNPK.

4 helical membrane passes run 16–36 (LAIS…WFYA), 55–75 (FITY…VLLY), 92–112 (EGGM…YLFC), and 117–137 (INFL…LFLG). Position 138 (Arg-138) interacts with a 1,2-diacyl-sn-glycero-3-phospho-(1'-sn-glycerol). The next 3 helical transmembrane spans lie at 172–192 (QLYE…YATF), 201–221 (GLNS…IEIF), and 228–248 (IGFI…MLLL).

Belongs to the Lgt family.

The protein resides in the cell inner membrane. It catalyses the reaction L-cysteinyl-[prolipoprotein] + a 1,2-diacyl-sn-glycero-3-phospho-(1'-sn-glycerol) = an S-1,2-diacyl-sn-glyceryl-L-cysteinyl-[prolipoprotein] + sn-glycerol 1-phosphate + H(+). It functions in the pathway protein modification; lipoprotein biosynthesis (diacylglyceryl transfer). Functionally, catalyzes the transfer of the diacylglyceryl group from phosphatidylglycerol to the sulfhydryl group of the N-terminal cysteine of a prolipoprotein, the first step in the formation of mature lipoproteins. This is Phosphatidylglycerol--prolipoprotein diacylglyceryl transferase from Rickettsia rickettsii (strain Iowa).